The chain runs to 304 residues: Elongation factor Ts (304 aa).

The involved in Mg(2+) ion dislocation from EF-Tu stretch occupies residues 79–82 (TDFV).

Belongs to the EF-Ts family.

The protein resides in the cytoplasm. Functionally, associates with the EF-Tu.GDP complex and induces the exchange of GDP to GTP. It remains bound to the aminoacyl-tRNA.EF-Tu.GTP complex up to the GTP hydrolysis stage on the ribosome. This chain is Elongation factor Ts, found in Polaromonas sp. (strain JS666 / ATCC BAA-500).